The following is a 247-amino-acid chain: Probable dihydroorotate dehydrogenase B (NAD(+)), electron transfer subunit (247 aa).

The region spanning 1 to 87 is the FAD-binding FR-type domain; the sequence is MLRRVSIEET…RGPYGHGFSG (87 aa). Positions 201, 206, 209, and 217 each coordinate [2Fe-2S] cluster.

This sequence belongs to the PyrK family. Heterotetramer of 2 PyrK and 2 PyrD type B subunits. Requires [2Fe-2S] cluster as cofactor. FAD serves as cofactor.

The protein operates within pyrimidine metabolism; UMP biosynthesis via de novo pathway; orotate from (S)-dihydroorotate (NAD(+) route): step 1/1. Functionally, responsible for channeling the electrons from the oxidation of dihydroorotate from the FMN redox center in the PyrD type B subunit to the ultimate electron acceptor NAD(+). This is Probable dihydroorotate dehydrogenase B (NAD(+)), electron transfer subunit from Pyrococcus furiosus (strain ATCC 43587 / DSM 3638 / JCM 8422 / Vc1).